Reading from the N-terminus, the 399-residue chain is Zinc finger HIT domain-containing protein 2 (399 aa).

Methionine 1 bears the N-acetylmethionine mark. Zn(2+) contacts are provided by cysteine 7, cysteine 10, cysteine 22, cysteine 25, cysteine 30, cysteine 34, histidine 38, and cysteine 41. The segment at 7–41 (CGFCPTGEAQPARYTCPRCNVPYCSLRCYRAHGSC) adopts an HIT-type zinc-finger fold. 2 disordered regions span residues 71–97 (LRQQ…GLSG) and 141–166 (EELG…PEPV).

As to quaternary structure, interacts (via HIT-type zinc finger) with RUVBL2 in the presence of ATP or ADP; shows a stronger interaction in the presence of ADP.

Its function is as follows. May act as a bridging factor mediating the interaction between the R2TP/Prefoldin-like (R2TP/PFDL) complex and U5 small nuclear ribonucleoprotein (U5 snRNP). Required for the interaction of R2TP complex subunit RPAP3 and prefoldin-like subunit URI1 with U5 snRNP proteins EFTUD2 and PRPF8. May play a role in regulating the composition of the U5 snRNP complex. The polypeptide is Zinc finger HIT domain-containing protein 2 (ZNHIT2) (Bos taurus (Bovine)).